The primary structure comprises 256 residues: Thiazole synthase (256 aa).

Catalysis depends on lysine 95, which acts as the Schiff-base intermediate with DXP. 1-deoxy-D-xylulose 5-phosphate-binding positions include glycine 156, 182-183, and 204-205; these read AG and NT.

Belongs to the ThiG family. Homotetramer. Forms heterodimers with either ThiH or ThiS.

Its subcellular location is the cytoplasm. It catalyses the reaction [ThiS sulfur-carrier protein]-C-terminal-Gly-aminoethanethioate + 2-iminoacetate + 1-deoxy-D-xylulose 5-phosphate = [ThiS sulfur-carrier protein]-C-terminal Gly-Gly + 2-[(2R,5Z)-2-carboxy-4-methylthiazol-5(2H)-ylidene]ethyl phosphate + 2 H2O + H(+). It participates in cofactor biosynthesis; thiamine diphosphate biosynthesis. Functionally, catalyzes the rearrangement of 1-deoxy-D-xylulose 5-phosphate (DXP) to produce the thiazole phosphate moiety of thiamine. Sulfur is provided by the thiocarboxylate moiety of the carrier protein ThiS. In vitro, sulfur can be provided by H(2)S. This is Thiazole synthase from Escherichia fergusonii (strain ATCC 35469 / DSM 13698 / CCUG 18766 / IAM 14443 / JCM 21226 / LMG 7866 / NBRC 102419 / NCTC 12128 / CDC 0568-73).